A 652-amino-acid chain; its full sequence is Pesticidal crystal protein Cry3Bb (652 aa).

Residues 1–12 show a composition bias toward basic and acidic residues; it reads MNPNNRSEHDTI. Disordered stretches follow at residues 1-33 and 433-465; these read MNPN…ADNP and KNET…ETTD. Polar residues predominate over residues 14-33; the sequence is VTPNSELQTNHNQYPLADNP.

Belongs to the delta endotoxin family. Monomer.

In terms of biological role, promotes colloidosmotic lysis by binding to the midgut epithelial cells of Coleoptera. Has moderate level of toxicity to southern corn rootworm. The protein is Pesticidal crystal protein Cry3Bb (cry3Bb) of Bacillus thuringiensis.